A 424-amino-acid polypeptide reads, in one-letter code: L-rhamnose isomerase (424 aa).

Mn(2+) is bound by residues His-261, Asp-293, and Asp-295.

Belongs to the rhamnose isomerase family. It depends on Mn(2+) as a cofactor.

It is found in the cytoplasm. The catalysed reaction is L-rhamnopyranose = L-rhamnulose. It functions in the pathway carbohydrate degradation; L-rhamnose degradation; glycerone phosphate from L-rhamnose: step 1/3. Functionally, catalyzes the interconversion of L-rhamnose and L-rhamnulose. This chain is L-rhamnose isomerase, found in Bacillus subtilis (strain 168).